A 149-amino-acid polypeptide reads, in one-letter code: UPF0178 protein VF_0601 (149 aa).

This sequence belongs to the UPF0178 family.

The polypeptide is UPF0178 protein VF_0601 (Aliivibrio fischeri (strain ATCC 700601 / ES114) (Vibrio fischeri)).